The following is a 34-amino-acid chain: MSDINAARLPSFFFPVPCISDDIEMVLTRGESLC.

The propeptide occupies M1–P10. Residues S11–P17 constitute a cross-link (cyclopeptide (Ser-Pro)). Positions C18–C34 are excised as a propeptide.

This sequence belongs to the MSDIN fungal toxin family. Processed by the macrocyclase-peptidase enzyme POPB to yield a cyclic decapeptide. POPB first removes 10 residues from the N-terminus. Conformational trapping of the remaining peptide forces the enzyme to release this intermediate rather than proceed to macrocyclization. The enzyme rebinds the remaining peptide in a different conformation and catalyzes macrocyclization of the N-terminal 7 residues.

Functionally, cyclic heptapeptide that belongs to the MSDIN-like toxin family responsible for a large number of food poisoning cases and deaths. Cycloaminide E is structurally related to other cycloamanides that are non-toxic to mammals but show immunosuppressive activity. In Amanita phalloides (Death cap), this protein is Cycloamanide E proprotein.